The sequence spans 245 residues: Pyridoxine 5'-phosphate synthase (245 aa).

A 3-amino-2-oxopropyl phosphate-binding site is contributed by N7. 9 to 10 (DH) provides a ligand contact to 1-deoxy-D-xylulose 5-phosphate. Residue R18 coordinates 3-amino-2-oxopropyl phosphate. The active-site Proton acceptor is H43. The 1-deoxy-D-xylulose 5-phosphate site is built by R45 and H50. The active-site Proton acceptor is E70. T100 provides a ligand contact to 1-deoxy-D-xylulose 5-phosphate. H190 serves as the catalytic Proton donor. Residues G191 and 212–213 (GH) each bind 3-amino-2-oxopropyl phosphate.

Belongs to the PNP synthase family. Homooctamer; tetramer of dimers.

Its subcellular location is the cytoplasm. The enzyme catalyses 3-amino-2-oxopropyl phosphate + 1-deoxy-D-xylulose 5-phosphate = pyridoxine 5'-phosphate + phosphate + 2 H2O + H(+). It functions in the pathway cofactor biosynthesis; pyridoxine 5'-phosphate biosynthesis; pyridoxine 5'-phosphate from D-erythrose 4-phosphate: step 5/5. Functionally, catalyzes the complicated ring closure reaction between the two acyclic compounds 1-deoxy-D-xylulose-5-phosphate (DXP) and 3-amino-2-oxopropyl phosphate (1-amino-acetone-3-phosphate or AAP) to form pyridoxine 5'-phosphate (PNP) and inorganic phosphate. This is Pyridoxine 5'-phosphate synthase from Prochlorococcus marinus (strain MIT 9303).